A 432-amino-acid chain; its full sequence is Glutamate-1-semialdehyde 2,1-aminomutase 2 (432 aa).

Residue K268 is modified to N6-(pyridoxal phosphate)lysine.

This sequence belongs to the class-III pyridoxal-phosphate-dependent aminotransferase family. HemL subfamily. As to quaternary structure, homodimer. The cofactor is pyridoxal 5'-phosphate.

Its subcellular location is the cytoplasm. It catalyses the reaction (S)-4-amino-5-oxopentanoate = 5-aminolevulinate. It functions in the pathway porphyrin-containing compound metabolism; protoporphyrin-IX biosynthesis; 5-aminolevulinate from L-glutamyl-tRNA(Glu): step 2/2. The sequence is that of Glutamate-1-semialdehyde 2,1-aminomutase 2 from Listeria monocytogenes serovar 1/2a (strain ATCC BAA-679 / EGD-e).